The following is a 355-amino-acid chain: DnaJ homolog dnj-20 (355 aa).

The first 21 residues, methionine 1–cysteine 21, serve as a signal peptide directing secretion. In terms of domain architecture, J spans aspartate 24 to glycine 89.

The protein is DnaJ homolog dnj-20 of Caenorhabditis elegans.